Consider the following 551-residue polypeptide: MAMAGADGPTAGAAAAVRWRGGESLLLLLLRWPSSAELVAAWGAARASAVAPALAAASAACLALSAMLLADAVLMAAACFARRRPDRRYRATPLGAGAGADDDDDDEEAGRVAYPMVLVQIPMYNEREVYKLSIGAACGLSWPSDRLIVQVLDDSTDPTVKGLVELECKSWGNKGKNVKYEVRNTRKGYKAGALKEGLLRDYVQQCNYVAIFDADFQPEPDFLLRTIPYLVRNPQIGLVQAHWEFVNTSECLMTRIQKMTLHYHFKVEQEGGSSTFAFFGFNGTAGVWRISALEEAGGWKDRTTVEDMDLAVRAGLKGWKFVYLADVKVKSELPSNLKTYRHQQHRWTCGAANLFRKVGAEILFTKEVPFWWKFYLLYSFFFVRKVVAHVVPFMLYCVVIPFSVLIPEVTVPVWGVVYVPTTITLLHAIRNTSSIHFIPFWILFENVMSFHRTKAMFIGLLELGGVNEWVVTEKLGNGSNTKPASQILERPPCRFWDRWTMSEILFSIFLFFCATYNLAYGGDYYFVYIYLQAIAFLVVGIGFCGTISSNS.

The chain crosses the membrane as a helical span at residues 60 to 80; sequence ACLALSAMLLADAVLMAAACF. Aspartate 154 is a catalytic residue. Substrate contacts are provided by aspartate 213 and aspartate 215. Aspartate 307 is an active-site residue. 4 helical membrane-spanning segments follow: residues 386-406, 409-429, 504-524, and 525-545; these read VVAH…SVLI, VTVP…LHAI, ILFS…GGDY, and YFVY…GFCG.

Belongs to the glycosyltransferase 2 family. Plant cellulose synthase-like A subfamily.

The protein resides in the golgi apparatus membrane. It catalyses the reaction GDP-mannose + (glucomannan)n = GDP + (glucomannan)n+1.. Probable mannan synthase which consists of a 4-beta-mannosyltransferase activity on mannan using GDP-mannose. The beta-1,4-mannan product is the backbone for galactomannan synthesis by galactomannan galactosyltransferase. Galactomannan is a noncellulosic polysaccharides of plant cell wall. This Oryza sativa subsp. japonica (Rice) protein is Probable glucomannan 4-beta-mannosyltransferase 3.